Here is a 135-residue protein sequence, read N- to C-terminus: ARGOS-like protein (135 aa).

Residues 71–122 (FSLESMVVLVGLTASLLILPLILPPLPPPPFMLLLIPIGIMVLLMVLAFMPS) are organ Size Related (OSR) domain. A run of 2 helical transmembrane segments spans residues 76 to 96 (MVVL…LPPL) and 100 to 120 (PFML…LAFM).

The protein belongs to the plant organ size related (OSR) protein family. Expressed in cotyledons, roots, flowers, siliques and leaves.

It is found in the membrane. Its subcellular location is the nucleus. It localises to the cytoplasm. The protein localises to the endoplasmic reticulum. Promotes cell expansion-dependent organ growth, probably via a brassinosteroids signaling pathway. Acts downstream of BRI1. The protein is ARGOS-like protein (ARL) of Arabidopsis thaliana (Mouse-ear cress).